Reading from the N-terminus, the 215-residue chain is Protein NETWORKED 3B (215 aa).

The NAB domain occupies 5–90 (SKWWWIGANH…QKHDLLIKTS (86 aa)). A coiled-coil region spans residues 134–165 (DETMKEELEILREENRVYKEKKEVVTRLLANL).

This sequence belongs to the NET family. Interacts with F-actin.

Its function is as follows. Plant-specific actin binding protein. May be part of a membrane-cytoskeletal adapter complex. In Arabidopsis thaliana (Mouse-ear cress), this protein is Protein NETWORKED 3B.